Reading from the N-terminus, the 131-residue chain is Small ribosomal subunit protein uS8 (131 aa).

The protein belongs to the universal ribosomal protein uS8 family. Part of the 30S ribosomal subunit. Contacts proteins S5 and S12.

In terms of biological role, one of the primary rRNA binding proteins, it binds directly to 16S rRNA central domain where it helps coordinate assembly of the platform of the 30S subunit. This Leptothrix cholodnii (strain ATCC 51168 / LMG 8142 / SP-6) (Leptothrix discophora (strain SP-6)) protein is Small ribosomal subunit protein uS8.